A 366-amino-acid polypeptide reads, in one-letter code: Chorismate synthase (366 aa).

Arginine 48 and arginine 54 together coordinate NADP(+). Residues 125 to 127, 238 to 239, glycine 278, 293 to 297, and arginine 319 each bind FMN; these read RSS, NA, and KPTSS.

Belongs to the chorismate synthase family. Homotetramer. FMNH2 serves as cofactor.

The enzyme catalyses 5-O-(1-carboxyvinyl)-3-phosphoshikimate = chorismate + phosphate. It participates in metabolic intermediate biosynthesis; chorismate biosynthesis; chorismate from D-erythrose 4-phosphate and phosphoenolpyruvate: step 7/7. Functionally, catalyzes the anti-1,4-elimination of the C-3 phosphate and the C-6 proR hydrogen from 5-enolpyruvylshikimate-3-phosphate (EPSP) to yield chorismate, which is the branch point compound that serves as the starting substrate for the three terminal pathways of aromatic amino acid biosynthesis. This reaction introduces a second double bond into the aromatic ring system. The polypeptide is Chorismate synthase (Burkholderia orbicola (strain MC0-3)).